Reading from the N-terminus, the 446-residue chain is D(1A) dopamine receptor (446 aa).

At 1–23 the chain is on the extracellular side; it reads MRTLNTSTMEGTGLVAERDFSFR. The N-linked (GlcNAc...) asparagine glycan is linked to N5. The helical transmembrane segment at 24–49 threads the bilayer; it reads ILTACFLSLLILSTLLGNTLVCAAVI. At 50-60 the chain is on the cytoplasmic side; it reads RFRHLRSKVTN. The chain crosses the membrane as a helical span at residues 61–87; that stretch reads FFVISLAVSDLLVAVLVMPWKAVAEIA. Residues 88–96 lie on the Extracellular side of the membrane; the sequence is GFWPFGSFC. C96 and C186 are disulfide-bonded. Residues 97–119 form a helical membrane-spanning segment; that stretch reads NIWVAFDIMCSTASILNLCVISV. The Cytoplasmic portion of the chain corresponds to 120 to 138; it reads DRYWAISSPFRYERKMTPK. Residues 139–163 form a helical membrane-spanning segment; that stretch reads AAFILISVAWTLSVLISFIPVQLSW. Residues 164–192 lie on the Extracellular side of the membrane; the sequence is HKAKPTGPSEGNATSLGKTINNCDSSLSR. A glycan (N-linked (GlcNAc...) asparagine) is linked at N175. Residues 193 to 218 traverse the membrane as a helical segment; sequence TYAISSSLISFYIPVAIMIVTYTRIY. Residues 219-272 lie on the Cytoplasmic side of the membrane; it reads RIAQKQIRRISALERAAVHAKNCQTTTGNGNPMECSQPESSFKMSFKRETKVLK. The helical transmembrane segment at 273–299 threads the bilayer; the sequence is TLSVIMGVFVCCWLPFFILNCMVPFCG. The Extracellular segment spans residues 300 to 312; that stretch reads SGETKPFCIDSIT. A helical membrane pass occupies residues 313-337; the sequence is FDVFVWFGWANSSLNPIIYAFNADF. Residues 338–446 lie on the Cytoplasmic side of the membrane; sequence RKAFSTLLGC…PITQNGQHPT (109 aa). S-palmitoyl cysteine attachment occurs at residues C347 and C351.

This sequence belongs to the G-protein coupled receptor 1 family. Interacts with DNAJC14 via its C-terminus. Interacts with DRD2. Interacts with DORIP1.

It localises to the cell membrane. The protein resides in the endoplasmic reticulum membrane. Its subcellular location is the cell projection. It is found in the cilium membrane. The protein localises to the dendrite. It localises to the dendritic spine. Functionally, dopamine receptor whose activity is mediated by G proteins which activate adenylyl cyclase. In Bos taurus (Bovine), this protein is D(1A) dopamine receptor (DRD1).